Reading from the N-terminus, the 1303-residue chain is DNA-directed RNA polymerase subunit beta'' (1303 aa).

Zn(2+) contacts are provided by cysteine 225, cysteine 299, cysteine 306, and cysteine 309.

Belongs to the RNA polymerase beta' chain family. RpoC2 subfamily. In plastids the minimal PEP RNA polymerase catalytic core is composed of four subunits: alpha, beta, beta', and beta''. When a (nuclear-encoded) sigma factor is associated with the core the holoenzyme is formed, which can initiate transcription. It depends on Zn(2+) as a cofactor.

It localises to the plastid. The protein localises to the chloroplast. The catalysed reaction is RNA(n) + a ribonucleoside 5'-triphosphate = RNA(n+1) + diphosphate. Functionally, DNA-dependent RNA polymerase catalyzes the transcription of DNA into RNA using the four ribonucleoside triphosphates as substrates. The chain is DNA-directed RNA polymerase subunit beta'' from Rhodomonas salina (Cryptomonas salina).